We begin with the raw amino-acid sequence, 185 residues long: Ribosome-recycling factor (185 aa).

The protein belongs to the RRF family.

The protein localises to the cytoplasm. In terms of biological role, responsible for the release of ribosomes from messenger RNA at the termination of protein biosynthesis. May increase the efficiency of translation by recycling ribosomes from one round of translation to another. The chain is Ribosome-recycling factor from Zymomonas mobilis subsp. mobilis (strain ATCC 31821 / ZM4 / CP4).